We begin with the raw amino-acid sequence, 154 residues long: Protein X (154 aa).

The tract at residues 68-117 (PCALRFTSARRMETTVNAHQILPKVLHKRTLGLSAMSTTDLEAYFKDCLF) is mitochondrial targeting sequence.

It belongs to the orthohepadnavirus protein X family. May form homodimer. May interact with host CEBPA, CFLAR, CREB1, DDB1, E4F1, HBXIP, HSPD1/HSP60, NFKBIA, POLR2E and SMAD4. Interacts with host SMC5-SMC6 complex and induces its degradation. Interacts with host TRPC4AP; leading to prevent ubiquitination of TRPC4AP. Interacts with host PLSCR1; this interaction promotes ubiquitination and degradation of HBx and impairs HBx-mediated cell proliferation. Post-translationally, a fraction may be phosphorylated in insect cells and HepG2 cells, a human hepatoblastoma cell line. Phosphorylated in vitro by host protein kinase C or mitogen-activated protein kinase. N-acetylated in insect cells.

It localises to the host cytoplasm. The protein localises to the host nucleus. It is found in the host mitochondrion. Functionally, multifunctional protein that plays a role in silencing host antiviral defenses and promoting viral transcription. Does not seem to be essential for HBV infection. May be directly involved in development of cirrhosis and liver cancer (hepatocellular carcinoma). Most of cytosolic activities involve modulation of cytosolic calcium. The effect on apoptosis is controversial depending on the cell types in which the studies have been conducted. May induce apoptosis by localizing in mitochondria and causing loss of mitochondrial membrane potential. May also modulate apoptosis by binding host CFLAR, a key regulator of the death-inducing signaling complex (DISC). Promotes viral transcription by using the host E3 ubiquitin ligase DDB1 to target the SMC5-SMC6 complex to proteasomal degradation. This host complex would otherwise bind to viral episomal DNA, and prevents its transcription. Moderately stimulates transcription of many different viral and cellular transcription elements. Promoters and enhancers stimulated by HBx contain DNA binding sites for NF-kappa-B, AP-1, AP-2, c-EBP, ATF/CREB, or the calcium-activated factor NF-AT. This Hepatitis B virus genotype E (isolate Cote d'Ivoire/ABI-212/2003) (HBV-E) protein is Protein X.